A 638-amino-acid polypeptide reads, in one-letter code: Threonine--tRNA ligase (638 aa).

The region spanning 1–61 (MPNITLPDGS…EADTPLAIVT (61 aa)) is the TGS domain. Residues 242–533 (DHRKLGRLLD…LIEHYAGALP (292 aa)) form a catalytic region. The Zn(2+) site is built by cysteine 333, histidine 384, and histidine 510.

Belongs to the class-II aminoacyl-tRNA synthetase family. In terms of assembly, homodimer. Zn(2+) serves as cofactor.

The protein resides in the cytoplasm. The enzyme catalyses tRNA(Thr) + L-threonine + ATP = L-threonyl-tRNA(Thr) + AMP + diphosphate + H(+). Functionally, catalyzes the attachment of threonine to tRNA(Thr) in a two-step reaction: L-threonine is first activated by ATP to form Thr-AMP and then transferred to the acceptor end of tRNA(Thr). Also edits incorrectly charged L-seryl-tRNA(Thr). In Aromatoleum aromaticum (strain DSM 19018 / LMG 30748 / EbN1) (Azoarcus sp. (strain EbN1)), this protein is Threonine--tRNA ligase.